The primary structure comprises 103 residues: Histone H4 (103 aa).

Residues 1-14 show a composition bias toward gly residues; that stretch reads MSGRGKGGKGLGKG. A disordered region spans residues 1–20; sequence MSGRGKGGKGLGKGGAKRHR. The residue at position 2 (Ser2) is an N-acetylserine. N6-acetyllysine is present on Lys17. Residues 17-21 mediate DNA binding; sequence KRHRK. Lys21 carries the post-translational modification N6-methyllysine.

It belongs to the histone H4 family. The nucleosome is a histone octamer containing two molecules each of H2A, H2B, H3 and H4 assembled in one H3-H4 heterotetramer and two H2A-H2B heterodimers. The octamer wraps approximately 147 bp of DNA.

Its subcellular location is the nucleus. The protein resides in the chromosome. Functionally, core component of nucleosome. Nucleosomes wrap and compact DNA into chromatin, limiting DNA accessibility to the cellular machineries which require DNA as a template. Histones thereby play a central role in transcription regulation, DNA repair, DNA replication and chromosomal stability. DNA accessibility is regulated via a complex set of post-translational modifications of histones, also called histone code, and nucleosome remodeling. This chain is Histone H4, found in Pyrenomonas salina.